Here is a 426-residue protein sequence, read N- to C-terminus: Chordin-like protein 2 (426 aa).

An N-terminal signal peptide occupies residues 1-25 (MVPGVRIIPSLLGLVMFWLPLDSQA). 2 consecutive VWFC domains span residues 31 to 96 (KVCL…PRCV) and 109 to 175 (KSCQ…QTCK). The N-linked (GlcNAc...) asparagine glycan is linked to Asn-114. At Ser-182 the chain carries Phosphoserine. Polar residues predominate over residues 182 to 191 (STEENLTQLQ). The segment at 182-216 (STEENLTQLQHGERHSQDPCSERRGPSTPAPTSLS) is disordered. N-linked (GlcNAc...) asparagine glycosylation is present at Asn-186. Over residues 192–206 (HGERHSQDPCSERRG) the composition is skewed to basic and acidic residues. The span at 207-216 (PSTPAPTSLS) shows a compositional bias: low complexity. The VWFC 3 domain maps to 246–311 (KACTHNGKTY…VAGKCCKICP (66 aa)).

Interacts with GDF5. May interact with INHBA, BMP2, BMP4, BMP5, BMP6, and BMP7. In terms of tissue distribution, weakly expressed in the liver and kidney. In reproductive organs expressed in connective tissues such as ligaments of the ovary and oviduct in females, and of testis, epididymis and certain male accessory sex glands in males. Expression was high in uterine myometrium. Weakly expressed in cartilage of the femoral head, patella, articular facets of vertebrae, in the annulus fibrosus of intervertebral disks. In normal cartilage, expression was confined to articular chondrocytes especially in the superficial zone.

The protein resides in the secreted. Its function is as follows. Implicated in tumor angiogenesis. May inhibits BMPs activity by blocking their interaction with their receptors. Has a negative regulator effect on the cartilage formation/regeneration from immature mesenchymal cells, by preventing or reducing the rate of matrix accumulation. May play a role during myoblast and osteoblast differentiation, and maturation. This chain is Chordin-like protein 2 (Chrdl2), found in Mus musculus (Mouse).